The chain runs to 332 residues: Putative potassium channel regulatory protein sup-10 (332 aa).

An N-terminal signal peptide occupies residues 1-18 (MRYAVFIFLIVLIDLIYC). Over 19–301 (WNSKRSFFIP…EISERNKRPA (283 aa)) the chain is Extracellular. N-linked (GlcNAc...) asparagine glycans are attached at residues asparagine 61, asparagine 107, and asparagine 166. The chain crosses the membrane as a helical span at residues 302-322 (FVLVGLTGGIAVIILAFSIFW). Residues 323–332 (GLNGSGFNKD) are Cytoplasmic-facing.

In terms of assembly, may form a complex with sup-9 and unc-93 where sup-10 and unc-93 act as regulatory subunits of the two pore potassium channel sup-9. Sup-10 may regulate sup-9 via sup-18. As to expression, low levels in body-wall muscles, eight vulval muscles, intestinal muscles and anal depressor muscle.

Its subcellular location is the membrane. In terms of biological role, may contribute to coordination of muscle contraction as regulatory subunit of a nonessential potassium channel complex. The polypeptide is Putative potassium channel regulatory protein sup-10 (Caenorhabditis elegans).